The chain runs to 100 residues: Urease subunit gamma (100 aa).

Belongs to the urease gamma subunit family. As to quaternary structure, heterotrimer of UreA (gamma), UreB (beta) and UreC (alpha) subunits. Three heterotrimers associate to form the active enzyme.

It is found in the cytoplasm. The catalysed reaction is urea + 2 H2O + H(+) = hydrogencarbonate + 2 NH4(+). The protein operates within nitrogen metabolism; urea degradation; CO(2) and NH(3) from urea (urease route): step 1/1. This is Urease subunit gamma from Paraburkholderia xenovorans (strain LB400).